Reading from the N-terminus, the 338-residue chain is RNA 3'-terminal phosphate cyclase (338 aa).

ATP contacts are provided by residues Q103 and 283 to 287 (YLADQ). The active-site Tele-AMP-histidine intermediate is the H308.

Belongs to the RNA 3'-terminal cyclase family. Type 1 subfamily.

It localises to the cytoplasm. It catalyses the reaction a 3'-end 3'-phospho-ribonucleotide-RNA + ATP = a 3'-end 2',3'-cyclophospho-ribonucleotide-RNA + AMP + diphosphate. Catalyzes the conversion of 3'-phosphate to a 2',3'-cyclic phosphodiester at the end of RNA. The mechanism of action of the enzyme occurs in 3 steps: (A) adenylation of the enzyme by ATP; (B) transfer of adenylate to an RNA-N3'P to produce RNA-N3'PP5'A; (C) and attack of the adjacent 2'-hydroxyl on the 3'-phosphorus in the diester linkage to produce the cyclic end product. The biological role of this enzyme is unknown but it is likely to function in some aspects of cellular RNA processing. The polypeptide is RNA 3'-terminal phosphate cyclase (Escherichia coli (strain SMS-3-5 / SECEC)).